The sequence spans 326 residues: MNQSVTRPRPDAKALGKVGVLYGGRSAERDVSLMSGKGVHQALLSAGVDAHLFDTGERTLAELAAAGFDRVFIALHGRYGEDGTLQGALELLGLPYTGSGPMASSLSMDKIMTKRVWLQHGLRTPAFEVLDAQAELRTVPDRLGLPLILKPPHEGSTVGITKVAGYSDMKEGYAQAAKFDDEVLAEQFIAGRELTVAVLGTGAAAHALPVIEIVAPGGNYDYEHKYFSDETQYFCPADLPDAVAAEVADLAVRAYRALGCAGWGRIDFMLDADNRPWLLEANTSPGMTSHSLVPMAAKAIGMSYAELCVSIVSEAACKVHSPARNS.

Positions 114 to 313 (KRVWLQHGLR…YAELCVSIVS (200 aa)) constitute an ATP-grasp domain. 140-195 (PDRLGLPLILKPPHEGSTVGITKVAGYSDMKEGYAQAAKFDDEVLAEQFIAGRELT) contributes to the ATP binding site. Residues aspartate 267, glutamate 280, and asparagine 282 each coordinate Mg(2+).

This sequence belongs to the D-alanine--D-alanine ligase family. It depends on Mg(2+) as a cofactor. Requires Mn(2+) as cofactor.

It is found in the cytoplasm. It catalyses the reaction 2 D-alanine + ATP = D-alanyl-D-alanine + ADP + phosphate + H(+). It functions in the pathway cell wall biogenesis; peptidoglycan biosynthesis. Its function is as follows. Cell wall formation. This Bordetella petrii (strain ATCC BAA-461 / DSM 12804 / CCUG 43448) protein is D-alanine--D-alanine ligase.